A 446-amino-acid chain; its full sequence is ATP-dependent protease ATPase subunit HslU (446 aa).

ATP is bound by residues Ile-18, 60-65, Asp-259, Glu-324, and Arg-396; that span reads GVGKTE.

This sequence belongs to the ClpX chaperone family. HslU subfamily. A double ring-shaped homohexamer of HslV is capped on each side by a ring-shaped HslU homohexamer. The assembly of the HslU/HslV complex is dependent on binding of ATP.

It localises to the cytoplasm. Its function is as follows. ATPase subunit of a proteasome-like degradation complex; this subunit has chaperone activity. The binding of ATP and its subsequent hydrolysis by HslU are essential for unfolding of protein substrates subsequently hydrolyzed by HslV. HslU recognizes the N-terminal part of its protein substrates and unfolds these before they are guided to HslV for hydrolysis. The chain is ATP-dependent protease ATPase subunit HslU from Vibrio atlanticus (strain LGP32) (Vibrio splendidus (strain Mel32)).